The sequence spans 205 residues: Nitrophorin-7 (205 aa).

The first 20 residues, 1–20 (MELYTALLAVTILSPSSIVG), serve as a signal peptide directing secretion. Cystine bridges form between cysteine 25–cysteine 144 and cysteine 62–cysteine 193. Position 52 (aspartate 52) interacts with histamine. Heme contacts are provided by histidine 80 and asparagine 91. Aspartate 154 provides a ligand contact to histamine.

Belongs to the calycin superfamily. Nitrophorin family. Forms oligomers (at pH 5.5). The cofactor is heme b. Expressed in the endothelial cells of the salivary glands.

It localises to the secreted. The enzyme catalyses 3 nitrite + 2 H(+) = 2 nitric oxide + nitrate + H2O. Its function is as follows. Converts nitrite as the sole substrate to form nitric oxide gas (NO). NO(2-) serves both as an electron donor and as an electron acceptor. Binds to negatively charged cell surfaces of activated platelets; binds to L-a-phosphatidyl-L-serine (PS)-bearing phospholipid membranes. Once bound on an activated platelet, NP7 releases its stored nitric oxide gas (NO) into the victim's tissues while feeding, resulting in vasodilation and inhibition of platelet aggregation. Also acts as an anticoagulant by blocking coagulation-factor binding sites. Has antihistamine activity; binds histamine with high affinity. The sequence is that of Nitrophorin-7 from Rhodnius prolixus (Triatomid bug).